A 367-amino-acid polypeptide reads, in one-letter code: Putative F-box protein At3g21130 (367 aa).

An F-box domain is found at 4–50 (KRNTVYLSEDLIVEILSRVSAVSLARLRTTSKRWNALVKDERLAKKH).

The sequence is that of Putative F-box protein At3g21130 from Arabidopsis thaliana (Mouse-ear cress).